We begin with the raw amino-acid sequence, 142 residues long: Nucleoside diphosphate kinase (142 aa).

Residues Lys-11, Phe-59, Arg-87, Thr-93, Arg-104, and Asn-114 each contribute to the ATP site. The active-site Pros-phosphohistidine intermediate is the His-117.

This sequence belongs to the NDK family. The cofactor is Mg(2+).

The protein localises to the cytoplasm. The catalysed reaction is a 2'-deoxyribonucleoside 5'-diphosphate + ATP = a 2'-deoxyribonucleoside 5'-triphosphate + ADP. It catalyses the reaction a ribonucleoside 5'-diphosphate + ATP = a ribonucleoside 5'-triphosphate + ADP. Its function is as follows. Major role in the synthesis of nucleoside triphosphates other than ATP. The ATP gamma phosphate is transferred to the NDP beta phosphate via a ping-pong mechanism, using a phosphorylated active-site intermediate. This chain is Nucleoside diphosphate kinase, found in Hyperthermus butylicus (strain DSM 5456 / JCM 9403 / PLM1-5).